Here is a 151-residue protein sequence, read N- to C-terminus: Ribonuclease H (151 aa).

An RNase H type-1 domain is found at 1–143 (MSDVVVIHTD…ADVLATRGLQ (143 aa)). 4 residues coordinate Mg(2+): D10, E49, D71, and D135.

It belongs to the RNase H family. As to quaternary structure, monomer. Requires Mg(2+) as cofactor.

It is found in the cytoplasm. It carries out the reaction Endonucleolytic cleavage to 5'-phosphomonoester.. Functionally, endonuclease that specifically degrades the RNA of RNA-DNA hybrids. The polypeptide is Ribonuclease H (Mycolicibacterium gilvum (strain PYR-GCK) (Mycobacterium gilvum (strain PYR-GCK))).